Reading from the N-terminus, the 243-residue chain is MARKGPKRHLKRLAAPTSWYIERKAYKWAVRPRPGPHNMRTSIPLLYIVRDYLGYAKTAREARKILNEGKFLVDGRVRKDYKFPVGIMDVVSIPETGEHYRVLPNRIGKLILHPISEDEAFIKPLRIRNKRMIKGARVQLNFHDGTNHIVSIAEKDNYFTSYTVLMKVPEREILEVLPFEKGAYVFVTQGKNVARKGRIVEIKRFPMGWPDVVTIEDEEGELFDTLKEYAFVVGTDKPKISLP.

An S4 RNA-binding domain is found at 43 to 105 (IPLLYIVRDY…TGEHYRVLPN (63 aa)).

Belongs to the eukaryotic ribosomal protein eS4 family. In terms of assembly, part of the 30S ribosomal subunit.

In Pyrococcus furiosus (strain ATCC 43587 / DSM 3638 / JCM 8422 / Vc1), this protein is Small ribosomal subunit protein eS4.